Reading from the N-terminus, the 152-residue chain is Gene 57 protein (152 aa).

Residues 57-137 (RDMAITEGEI…IPMPEGEDVN (81 aa)) enclose the Toprim domain.

The chain is Gene 57 protein (57) from Mycobacterium (Mycobacteriophage D29).